A 78-amino-acid chain; its full sequence is Probable [Fe-S]-dependent transcriptional repressor (78 aa).

Residues cysteine 56, cysteine 61, cysteine 64, and cysteine 70 each contribute to the iron-sulfur cluster site.

The protein belongs to the FeoC family.

May function as a transcriptional regulator that controls feoABC expression. The sequence is that of Probable [Fe-S]-dependent transcriptional repressor from Escherichia coli O127:H6 (strain E2348/69 / EPEC).